The chain runs to 102 residues: Glutaredoxin-C14 (102 aa).

Positions 1-101 constitute a Glutaredoxin domain; it reads MDKVMRMSSE…PLIKPYQSFH (101 aa). An intrachain disulfide couples C21 to C24.

Belongs to the glutaredoxin family. CC-type subfamily.

It localises to the cytoplasm. Functionally, has a glutathione-disulfide oxidoreductase activity in the presence of NADPH and glutathione reductase. Reduces low molecular weight disulfides and proteins. This chain is Glutaredoxin-C14 (GRXC14), found in Arabidopsis thaliana (Mouse-ear cress).